The primary structure comprises 2028 residues: Pecanex-like protein 3 (2028 aa).

Transmembrane regions (helical) follow at residues C33 to L53 and P54 to I74. A glycan (N-linked (GlcNAc...) asparagine) is linked at N95. Residues S96–P116 are disordered. S127 is subject to Phosphoserine. A Phosphothreonine modification is found at T129. Disordered regions lie at residues I193 to P239 and L263 to R625. The span at Q198–S208 shows a compositional bias: pro residues. Basic and acidic residues-rich tracts occupy residues L263–C273 and T305–N319. N-linked (GlcNAc...) asparagine glycosylation occurs at N319. A Phosphothreonine modification is found at T370. 2 positions are modified to phosphoserine: S392 and S431. Over residues G427–R437 the composition is skewed to polar residues. Over residues T444–Q459 the composition is skewed to low complexity. A compositionally biased stretch (polar residues) spans T488–A497. Phosphoserine occurs at positions 505 and 521. 7 helical membrane-spanning segments follow: residues N793–F815, I819–L836, W852–L872, P880–A900, V903–V923, S946–C968, and H980–S1000. S1025 bears the Phosphoserine mark. Transmembrane regions (helical) follow at residues L1053–I1073, V1078–L1098, F1244–A1264, and L1280–M1300. At S1697 the chain carries Phosphoserine. An N-linked (GlcNAc...) asparagine glycan is attached at N1770. Residues G1845–Y2028 are disordered. A compositionally biased stretch (pro residues) spans R1890–P1921. Phosphoserine is present on residues S1909 and S1955. The span at P1966–S1977 shows a compositional bias: low complexity. Residues E1978 to D1987 are compositionally biased toward polar residues.

It belongs to the pecanex family.

Its subcellular location is the membrane. The protein is Pecanex-like protein 3 of Mus musculus (Mouse).